We begin with the raw amino-acid sequence, 312 residues long: Pantothenate kinase (312 aa).

97–104 (GSVAVGKS) contacts ATP.

The protein belongs to the prokaryotic pantothenate kinase family.

The protein resides in the cytoplasm. It catalyses the reaction (R)-pantothenate + ATP = (R)-4'-phosphopantothenate + ADP + H(+). The protein operates within cofactor biosynthesis; coenzyme A biosynthesis; CoA from (R)-pantothenate: step 1/5. The polypeptide is Pantothenate kinase (Corynebacterium glutamicum (strain ATCC 13032 / DSM 20300 / JCM 1318 / BCRC 11384 / CCUG 27702 / LMG 3730 / NBRC 12168 / NCIMB 10025 / NRRL B-2784 / 534)).